A 434-amino-acid chain; its full sequence is Trigger factor (434 aa).

Residues 162–247 (GDKINISLIA…FNTVEQAKLP (86 aa)) form the PPIase FKBP-type domain.

It belongs to the FKBP-type PPIase family. Tig subfamily.

It localises to the cytoplasm. It carries out the reaction [protein]-peptidylproline (omega=180) = [protein]-peptidylproline (omega=0). Its function is as follows. Involved in protein export. Acts as a chaperone by maintaining the newly synthesized protein in an open conformation. Functions as a peptidyl-prolyl cis-trans isomerase. This Methylobacillus flagellatus (strain ATCC 51484 / DSM 6875 / VKM B-1610 / KT) protein is Trigger factor.